The primary structure comprises 179 residues: Adenine phosphoribosyltransferase (179 aa).

This sequence belongs to the purine/pyrimidine phosphoribosyltransferase family. Homodimer.

Its subcellular location is the cytoplasm. The catalysed reaction is AMP + diphosphate = 5-phospho-alpha-D-ribose 1-diphosphate + adenine. It functions in the pathway purine metabolism; AMP biosynthesis via salvage pathway; AMP from adenine: step 1/1. Catalyzes a salvage reaction resulting in the formation of AMP, that is energically less costly than de novo synthesis. The chain is Adenine phosphoribosyltransferase from Methylacidiphilum infernorum (isolate V4) (Methylokorus infernorum (strain V4)).